The following is a 256-amino-acid chain: tRNA (guanine-N(7)-)-methyltransferase (256 aa).

The disordered stretch occupies residues 1–43 (MDVDPVNSEMELDNKPTCETVPGLPQKKHYRQRAHSNPHSDHD). The segment covering 26-36 (QKKHYRQRAHS) has biased composition (basic residues). S-adenosyl-L-methionine contacts are provided by residues glycine 74, 97-98 (EI), 132-133 (NA), and leucine 152. Aspartate 155 is a catalytic residue. 230–232 (TEE) contributes to the S-adenosyl-L-methionine binding site.

It belongs to the class I-like SAM-binding methyltransferase superfamily. TrmB family.

It is found in the nucleus. The catalysed reaction is guanosine(46) in tRNA + S-adenosyl-L-methionine = N(7)-methylguanosine(46) in tRNA + S-adenosyl-L-homocysteine. It participates in tRNA modification; N(7)-methylguanine-tRNA biosynthesis. Functionally, catalyzes the formation of N(7)-methylguanine at position 46 (m7G46) in tRNA. In Caenorhabditis briggsae, this protein is tRNA (guanine-N(7)-)-methyltransferase.